We begin with the raw amino-acid sequence, 142 residues long: Small ribosomal subunit protein uS12 (142 aa).

Belongs to the universal ribosomal protein uS12 family. In terms of assembly, part of the 30S ribosomal subunit.

Functionally, with S4 and S5 plays an important role in translational accuracy. Located at the interface of the 30S and 50S subunits. This is Small ribosomal subunit protein uS12 from Methanospirillum hungatei JF-1 (strain ATCC 27890 / DSM 864 / NBRC 100397 / JF-1).